We begin with the raw amino-acid sequence, 631 residues long: 1,4-alpha-glucan branching enzyme GlgB (631 aa).

The active-site Nucleophile is D309. Residue E362 is the Proton donor of the active site.

The protein belongs to the glycosyl hydrolase 13 family. GlgB subfamily. As to quaternary structure, monomer.

It catalyses the reaction Transfers a segment of a (1-&gt;4)-alpha-D-glucan chain to a primary hydroxy group in a similar glucan chain.. Its pathway is glycan biosynthesis; glycogen biosynthesis. Its function is as follows. Catalyzes the formation of the alpha-1,6-glucosidic linkages in glycogen by scission of a 1,4-alpha-linked oligosaccharide from growing alpha-1,4-glucan chains and the subsequent attachment of the oligosaccharide to the alpha-1,6 position. This is 1,4-alpha-glucan branching enzyme GlgB from Marinobacter nauticus (strain ATCC 700491 / DSM 11845 / VT8) (Marinobacter aquaeolei).